We begin with the raw amino-acid sequence, 918 residues long: Calcium-transporting ATPase type 2C member 1 (918 aa).

Residues 1-78 (MKVARFQKIP…EPLWKKYISQ (78 aa)) are Cytoplasmic-facing. The chain crosses the membrane as a helical span at residues 79–95 (FKNPLIMLLLASAVISI). Residues 96 to 99 (LMRQ) lie on the Extracellular side of the membrane. The helical transmembrane segment at 100-121 (FDDAVSITVAIVIVVTVAFVQE) threads the bilayer. At 122–262 (YRSEKSLEEL…PKTPLQKSMD (141 aa)) the chain is on the cytoplasmic side. The helical transmembrane segment at 263 to 282 (LLGKQLSFYSFGIIGIIMLV) threads the bilayer. Topologically, residues 283–294 (GWLLGKDILEMF) are extracellular. Residues 295–316 (TISVSLAVAAIPEGLPIVVTVT) traverse the membrane as a helical segment. Residues 317–699 (LALGVMRMVK…EGKGIYNNIK (383 aa)) are Cytoplasmic-facing. Asp-349 serves as the catalytic 4-aspartylphosphate intermediate. Asp-643 and Asp-647 together coordinate Mg(2+). The chain crosses the membrane as a helical span at residues 700-722 (NFVRFQLSTSIAALTLISLATLM). Residues 723 to 727 (NFPNP) are Extracellular-facing. Residues 728-751 (LNAMQILWINIIMDGPPAQSLGVE) form a helical membrane-spanning segment. Over 752-775 (PVDKDVIRKPPRNWKDSILTKNLI) the chain is Cytoplasmic. A helical membrane pass occupies residues 776-794 (LKILVSSIIIVCGTLFVFW). Residues 795–801 (RELRDNV) lie on the Extracellular side of the membrane. A helical transmembrane segment spans residues 802–827 (ITPRDTTMTFTCFVFFDMFNALSSRS). Topologically, residues 828 to 842 (QTKSVFEIGLCSNKM) are cytoplasmic. The chain crosses the membrane as a helical span at residues 843-862 (FCYAVLGSIMGQLLVIYFPP). Residues 863–875 (LQKVFQTESLSIL) are Extracellular-facing. Residues 876-892 (DLLFLLGLTSSVCIVSE) traverse the membrane as a helical segment. At 893 to 918 (IIKKVERSREKVQKNAGSASSSFLEV) the chain is on the cytoplasmic side.

It belongs to the cation transport ATPase (P-type) (TC 3.A.3) family. Type IIA subfamily. In terms of assembly, monomer. Homodimer. As to expression, expressed in hippocampal neurons in the CA3 region of the Amon's horn (at protein level). Expressed in brain, heart, lung, stomach, liver, colon and mammary gland.

It is found in the golgi apparatus. Its subcellular location is the trans-Golgi network membrane. The protein resides in the golgi stack membrane. It carries out the reaction Ca(2+)(in) + ATP + H2O = Ca(2+)(out) + ADP + phosphate + H(+). The catalysed reaction is Mn(2+)(in) + ATP + H2O = Mn(2+)(out) + ADP + phosphate + H(+). Functionally, ATP-driven pump that supplies the Golgi apparatus with Ca(2+) and Mn(2+) ions, both essential cofactors for processing and trafficking of newly synthesized proteins in the secretory pathway. Within a catalytic cycle, acquires Ca(2+) or Mn(2+) ions on the cytoplasmic side of the membrane and delivers them to the lumenal side. The transfer of ions across the membrane is coupled to ATP hydrolysis and is associated with a transient phosphorylation that shifts the pump conformation from inward-facing to outward-facing state. Plays a primary role in the maintenance of Ca(2+) homeostasis in the trans-Golgi compartment with a functional impact on Golgi and post-Golgi protein sorting as well as a structural impact on cisternae morphology. Responsible for loading the Golgi stores with Ca(2+) ions in keratinocytes, contributing to keratinocyte differentiation and epidermis integrity. Participates in Ca(2+) and Mn(2+) ions uptake into the Golgi store of hippocampal neurons and regulates protein trafficking required for neural polarity. May also play a role in the maintenance of Ca(2+) and Mn(2+) homeostasis and signaling in the cytosol while preventing cytotoxicity. The chain is Calcium-transporting ATPase type 2C member 1 from Mus musculus (Mouse).